The primary structure comprises 192 residues: Flagellar transcriptional regulator FlhC (192 aa).

Positions 137, 140, 157, and 160 each coordinate Zn(2+).

It belongs to the FlhC family. Heterohexamer composed of two FlhC and four FlhD subunits. Each FlhC binds a FlhD dimer, forming a heterotrimer, and a hexamer assembles by dimerization of two heterotrimers. Zn(2+) serves as cofactor.

The protein resides in the cytoplasm. Functions in complex with FlhD as a master transcriptional regulator that regulates transcription of several flagellar and non-flagellar operons by binding to their promoter region. Activates expression of class 2 flagellar genes, including fliA, which is a flagellum-specific sigma factor that turns on the class 3 genes. Also regulates genes whose products function in a variety of physiological pathways. This chain is Flagellar transcriptional regulator FlhC, found in Escherichia coli O6:H1 (strain CFT073 / ATCC 700928 / UPEC).